The sequence spans 309 residues: Dihydroorotate dehydrogenase B (NAD(+)), catalytic subunit (309 aa).

FMN-binding positions include S21 and 45 to 46 (KA). Substrate-binding positions include K45 and 69-73 (NAIGL). 2 residues coordinate FMN: N99 and N127. N127 is a substrate binding site. C130 functions as the Nucleophile in the catalytic mechanism. Residues K165 and I191 each contribute to the FMN site. Position 192–193 (192–193 (NT)) interacts with substrate. FMN-binding positions include G217, 243-244 (GG), and 265-266 (GT).

This sequence belongs to the dihydroorotate dehydrogenase family. Type 1 subfamily. Heterotetramer of 2 PyrK and 2 PyrD type B subunits. FMN is required as a cofactor.

It localises to the cytoplasm. The catalysed reaction is (S)-dihydroorotate + NAD(+) = orotate + NADH + H(+). It functions in the pathway pyrimidine metabolism; UMP biosynthesis via de novo pathway; orotate from (S)-dihydroorotate (NAD(+) route): step 1/1. Catalyzes the conversion of dihydroorotate to orotate with NAD(+) as electron acceptor. In Bacillus cereus (strain B4264), this protein is Dihydroorotate dehydrogenase B (NAD(+)), catalytic subunit (pyrD).